Reading from the N-terminus, the 271-residue chain is MEQHHQYLAHPHSSEEIRTEDYIAGLAKGLALLEAFGIDRQRLNVTQVAERTGISRTAARRYLKTLKFLGYLDTDEHYFWLTHRVLRFSSSYLSSAHLPKVAQSFLNLLCAQTSLTFSIVVLDEHEVVPVARSYLPQQDNLRVSPYGMHLGNRLPAHATSTGKVLLSVLDREVQIEWIEKYGLKRLTPYTITDEHTFLETLDAVRQSDYCLSTEEHELGLIAIAVPVLNAQGLTIAALNCMSQTNRVQPQYLIDQVLPLLRNTANELRNLV.

Residues Ile23–His83 enclose the HTH iclR-type domain. The segment at residues Val45–Lys64 is a DNA-binding region (H-T-H motif). Residues Leu98–Val271 enclose the IclR-ED domain.

In terms of biological role, positive regulator of the pobA gene for p-hydroxybenzoate hydroxylase. The chain is p-hydroxybenzoate hydroxylase transcriptional activator (pobR) from Acinetobacter baylyi (strain ATCC 33305 / BD413 / ADP1).